The following is a 232-amino-acid chain: Enolase-phosphatase E1 (232 aa).

This sequence belongs to the HAD-like hydrolase superfamily. MasA/MtnC family. In terms of assembly, monomer. Requires Mg(2+) as cofactor.

It carries out the reaction 5-methylsulfanyl-2,3-dioxopentyl phosphate + H2O = 1,2-dihydroxy-5-(methylsulfanyl)pent-1-en-3-one + phosphate. It functions in the pathway amino-acid biosynthesis; L-methionine biosynthesis via salvage pathway; L-methionine from S-methyl-5-thio-alpha-D-ribose 1-phosphate: step 3/6. The protein operates within amino-acid biosynthesis; L-methionine biosynthesis via salvage pathway; L-methionine from S-methyl-5-thio-alpha-D-ribose 1-phosphate: step 4/6. Functionally, bifunctional enzyme that catalyzes the enolization of 2,3-diketo-5-methylthiopentyl-1-phosphate (DK-MTP-1-P) into the intermediate 2-hydroxy-3-keto-5-methylthiopentenyl-1-phosphate (HK-MTPenyl-1-P), which is then dephosphorylated to form the acireductone 1,2-dihydroxy-3-keto-5-methylthiopentene (DHK-MTPene). The protein is Enolase-phosphatase E1 of Acidiphilium cryptum (strain JF-5).